Here is a 257-residue protein sequence, read N- to C-terminus: tRNA uridine(34) hydroxylase (257 aa).

Positions 128-222 constitute a Rhodanese domain; the sequence is NGRRLVMLDA…YFEQVGGEGY (95 aa). Cysteine 182 serves as the catalytic Cysteine persulfide intermediate.

This sequence belongs to the TrhO family.

The catalysed reaction is uridine(34) in tRNA + AH2 + O2 = 5-hydroxyuridine(34) in tRNA + A + H2O. Catalyzes oxygen-dependent 5-hydroxyuridine (ho5U) modification at position 34 in tRNAs. The sequence is that of tRNA uridine(34) hydroxylase from Xylella fastidiosa (strain 9a5c).